An 80-amino-acid chain; its full sequence is U6 snRNA-associated Sm-like protein LSm6 (80 aa).

A Sm domain is found at 7 to 79 (TPSDFLKQII…VLYISTQKRR (73 aa)). K59 carries the N6-acetyllysine modification.

The protein belongs to the snRNP Sm proteins family. SmF/LSm6 subfamily. Component of the precatalytic spliceosome (spliceosome B complex). Component of the U4/U6-U5 tri-snRNP complex, a building block of the precatalytic spliceosome (spliceosome B complex). The U4/U6-U5 tri-snRNP complex is composed of the U4, U6 and U5 snRNAs and at least PRPF3, PRPF4, PRPF6, PRPF8, PRPF31, SNRNP200, TXNL4A, SNRNP40, SNRPB, SNRPD1, SNRPD2, SNRPD3, SNRPE, SNRPF, SNRPG, DDX23, CD2BP2, PPIH, SNU13, EFTUD2, SART1 and USP39, plus LSM2, LSM3, LSM4, LSM5, LSM6, LSM7 and LSM8. LSM2, LSM3, LSM4, LSM5, LSM6, LSM7 and LSM8 form a heptameric, ring-shaped subcomplex (the LSM2-8 complex) that is part of the U4/U6-U5 tri-snRNP complex and the precatalytic spliceosome. Component of the heptameric LSM1-LSM7 complex, which consists of LSM1, LSM2, LSM3, LSM4, LSM5, LSM6 and LSM7.

The protein resides in the cytoplasm. Its subcellular location is the nucleus. In terms of biological role, plays a role in pre-mRNA splicing as component of the U4/U6-U5 tri-snRNP complex that is involved in spliceosome assembly, and as component of the precatalytic spliceosome (spliceosome B complex). The heptameric LSM2-8 complex binds specifically to the 3'-terminal U-tract of U6 snRNA. Component of LSm protein complexes, which are involved in RNA processing and may function in a chaperone-like manner, facilitating the efficient association of RNA processing factors with their substrates. Component of the cytoplasmic LSM1-LSM7 complex, which is thought to be involved in mRNA degradation by activating the decapping step in the 5'-to-3' mRNA decay pathway. The sequence is that of U6 snRNA-associated Sm-like protein LSm6 (LSM6) from Homo sapiens (Human).